The primary structure comprises 886 residues: Chitin synthase 3 (886 aa).

Disordered stretches follow at residues 1 to 70 (MQQG…YQTD) and 86 to 138 (PYEP…AGGG). A compositionally biased stretch (basic and acidic residues) spans 7–17 (LDDRPYGRPEQ). A compositionally biased stretch (polar residues) spans 37–56 (PSDQLQLNAAQSVDNLSRNS). N51 carries N-linked (GlcNAc...) asparagine glycosylation. A compositionally biased stretch (basic and acidic residues) spans 106 to 122 (YDHDDLRPMLPHQDSHA). An N-linked (GlcNAc...) asparagine glycan is attached at N196. 7 consecutive transmembrane segments (helical) span residues 428 to 448 (SAFGFISVLPGAFSAYRYVAL), 526 to 546 (RWLNGSFFAAIYAIAHFYQFF), 556 to 576 (VMLFIEFIFHTINMVFAWFAV), 602 to 622 (ILGVVFTWLYGVALFTCFVLS), 637 to 657 (MVYFWAIIMVYLMFAAIFIAV), 683 to 703 (TLIVSVMSTYGIWFLASFLMF), and 712 to 732 (FVQYMLLTPTYINILNVYAFC). A disordered region spans residues 745-768 (DQAEKLPSVSTKDGSGKTDLPDES). The next 2 helical transmembrane spans lie at 813–833 (VLAWMITNFGLAAVVLSAAGL) and 858–878 (VVLWSVAGLAAFKFIGAMWFL).

It belongs to the chitin synthase family. Class I subfamily.

The protein resides in the cell membrane. It catalyses the reaction [(1-&gt;4)-N-acetyl-beta-D-glucosaminyl](n) + UDP-N-acetyl-alpha-D-glucosamine = [(1-&gt;4)-N-acetyl-beta-D-glucosaminyl](n+1) + UDP + H(+). Its function is as follows. Polymerizes chitin, a structural polymer of the cell wall and septum, by transferring the sugar moiety of UDP-GlcNAc to the non-reducing end of the growing chitin polymer. Involved in tolerance to hyperosmotic conditions. CHS3 is the only V.dahliae chitin synthase that is not involved in virulence. The chain is Chitin synthase 3 from Verticillium dahliae (strain VdLs.17 / ATCC MYA-4575 / FGSC 10137) (Verticillium wilt).